The chain runs to 278 residues: Glutamate racemase (278 aa).

Substrate is bound by residues 25 to 26 (DS) and 57 to 58 (YG). Cys89 (proton donor/acceptor) is an active-site residue. 90 to 91 (NT) contacts substrate. Residue Cys204 is the Proton donor/acceptor of the active site. 205–206 (TH) serves as a coordination point for substrate.

Belongs to the aspartate/glutamate racemases family.

The catalysed reaction is L-glutamate = D-glutamate. The protein operates within cell wall biogenesis; peptidoglycan biosynthesis. Provides the (R)-glutamate required for cell wall biosynthesis. In Brucella anthropi (strain ATCC 49188 / DSM 6882 / CCUG 24695 / JCM 21032 / LMG 3331 / NBRC 15819 / NCTC 12168 / Alc 37) (Ochrobactrum anthropi), this protein is Glutamate racemase.